We begin with the raw amino-acid sequence, 201 residues long: UPF0301 protein Bpet0561 (201 aa).

Belongs to the UPF0301 (AlgH) family.

This Bordetella petrii (strain ATCC BAA-461 / DSM 12804 / CCUG 43448) protein is UPF0301 protein Bpet0561.